Reading from the N-terminus, the 343-residue chain is Zinc finger protein Gfi-1b (343 aa).

A mediates repression of transcription region spans residues 1–20 (MPRSFLVKSKKTHTYNQHRY). An SNAG domain region spans residues 1 to 20 (MPRSFLVKSKKTHTYNQHRY). The interval 51–77 (STDPTEKQHTPENVITEEARSDPGDPR) is disordered. Residues 67 to 77 (EEARSDPGDPR) are compositionally biased toward basic and acidic residues. 6 consecutive C2H2-type zinc fingers follow at residues 176 to 199 (YHCVKCSKVFSTSHGLEVHVRRSH), 205 to 227 (FVCNICGKSFGHAVSLEQHLNVH), 233 to 255 (FECKMCGKTFKRSSTLSTHLLIH), 261 to 283 (YPCQFCGKRFHQKSDMKKHTYIH), 289 to 311 (HKCQVCGKAFSQSSNLITHSRKH), and 317 to 340 (FSCDLCCKGFQRKVDLRRHRENQH).

It localises to the nucleus. Its function is as follows. Essential transcriptional regulator necessary for development and differentiation of erythroid and megakaryocytic lineages. Alters histone methylation by recruiting histone methyltransferase to target genes promoters. Plays a role in heterochromatin formation. This Xenopus laevis (African clawed frog) protein is Zinc finger protein Gfi-1b (gfi1b).